The sequence spans 226 residues: V-type proton ATPase subunit E 1 (226 aa).

At A2 the chain carries N-acetylalanine. The residue at position 56 (Y56) is a Phosphotyrosine.

Belongs to the V-ATPase E subunit family. As to quaternary structure, V-ATPase is a heteromultimeric enzyme made up of two complexes: the ATP-hydrolytic V1 complex and the proton translocation V0 complex. The V1 complex consists of three catalytic AB heterodimers that form a heterohexamer, three peripheral stalks each consisting of EG heterodimers, one central rotor including subunits D and F, and the regulatory subunits C and H. The proton translocation complex V0 consists of the proton transport subunit a, a ring of proteolipid subunits c9c'', rotary subunit d, subunits e and f, and the accessory subunits ATP6AP1/Ac45 and ATP6AP2/PRR. Interacts with RABL2/RABL2A; binds preferentially to GTP-bound RABL2. Interacts with ALDOC. Interacts with RAB11B. In terms of tissue distribution, expressed within the midpiece of sperm tail (at protein level). Kidney; localizes to early distal nephron, encompassing thick ascending limbs and distal convoluted tubules (at protein level).

The protein localises to the apical cell membrane. Its subcellular location is the cytoplasmic vesicle. It is found in the secretory vesicle. The protein resides in the synaptic vesicle membrane. It localises to the clathrin-coated vesicle membrane. In terms of biological role, subunit of the V1 complex of vacuolar(H+)-ATPase (V-ATPase), a multisubunit enzyme composed of a peripheral complex (V1) that hydrolyzes ATP and a membrane integral complex (V0) that translocates protons. V-ATPase is responsible for acidifying and maintaining the pH of intracellular compartments and in some cell types, is targeted to the plasma membrane, where it is responsible for acidifying the extracellular environment. The protein is V-type proton ATPase subunit E 1 (Atp6v1e1) of Mus musculus (Mouse).